Here is a 250-residue protein sequence, read N- to C-terminus: MEMVEEHIKGILKNRKIHFTLIDPDEQTPQEALEIAEEAILGGTDGIMIGGSTVNNDEVDETCKILSENIEVPIILFPGNINSVSKYADAIFFMSYLNSTNPYWIYGAQALAAPIVRQAGIEVLPMGYMVVQPGGTVGWVGDAKLVPRNKPKIPAAYAMSAELLGMRFFYIEAGSGADKPIPPEMVGYTKKATEDMVIIVGGGIRDGEAAYTAAKAGGDIIVTGTVVEETNDVRGKIEEITAAIRKASIE.

Mg(2+) is bound by residues D23 and S52. Sn-glycerol 1-phosphate is bound by residues 170–176, 202–203, and 224–225; these read YIEAGSG, GG, and GT.

The protein belongs to the GGGP/HepGP synthase family. Group II subfamily. Mg(2+) is required as a cofactor.

The protein localises to the cytoplasm. It catalyses the reaction sn-glycerol 1-phosphate + (2E,6E,10E)-geranylgeranyl diphosphate = sn-3-O-(geranylgeranyl)glycerol 1-phosphate + diphosphate. It participates in membrane lipid metabolism; glycerophospholipid metabolism. In terms of biological role, prenyltransferase that catalyzes the transfer of the geranylgeranyl moiety of geranylgeranyl diphosphate (GGPP) to the C3 hydroxyl of sn-glycerol-1-phosphate (G1P). This reaction is the first ether-bond-formation step in the biosynthesis of archaeal membrane lipids. The sequence is that of Geranylgeranylglyceryl phosphate synthase from Methanobrevibacter smithii (strain ATCC 35061 / DSM 861 / OCM 144 / PS).